A 336-amino-acid chain; its full sequence is MKGKFLKVSSLFVATLTTATLVSSPAANALSSKAMDNHPQQTQSSKQQTPKIQKGGNLKPLEQREHANVILPNNDRHQITDTTNGHYAPVTYIQVEAPTGTFIASGVVVGKDTLLTNKHVVDATHGDPHALKAFPSAINQDNYPNGGFTAEQITKYSGEGDLAIVKFSPNEQNKHIGEVVKPATMSNNAETQVNQNITVTGYPGDKPVATMWESKGKITYLKGEAMQYDLSTTGGNSGSPVFNEKNEVIGIHWGGVPNEFNGAVFINENVRNFLKQNIEDIHFANDDQPNNPDNPDNPNNPDNPNNPDEPNNPDNPNNPDNPDNGDNNNSDNPDAA.

The first 29 residues, 1–29 (MKGKFLKVSSLFVATLTTATLVSSPAANA), serve as a signal peptide directing secretion. Positions 30 to 68 (LSSKAMDNHPQQTQSSKQQTPKIQKGGNLKPLEQREHAN) are excised as a propeptide. Residues 34–61 (AMDNHPQQTQSSKQQTPKIQKGGNLKPL) form a disordered region. The segment covering 39-51 (PQQTQSSKQQTPK) has biased composition (low complexity). Active-site charge relay system residues include His119, Asp161, and Ser237. Residues 283-336 (FANDDQPNNPDNPDNPNNPDNPNNPDEPNNPDNPNNPDNPDNGDNNNSDNPDAA) are disordered. The segment covering 286–336 (DDQPNNPDNPDNPNNPDNPNNPDEPNNPDNPNNPDNPDNGDNNNSDNPDAA) has biased composition (low complexity). 11 tandem repeats follow at residues 289–291 (PNN), 292–294 (PDN), 295–297 (PDN), 298–300 (PNN), 301–303 (PDN), 304–306 (PNN), 310–312 (PNN), 313–315 (PDN), 316–318 (PNN), 319–321 (PDN), and 322–324 (PDN). Positions 289-324 (PNNPDNPDNPNNPDNPNNPDEPNNPDNPNNPDNPDN) are 11 X 3 AA repeats of P-[DN]-N.

The protein belongs to the peptidase S1B family. Proteolytically cleaved by aureolysin (aur). This cleavage leads to the activation of SspA.

Its subcellular location is the secreted. It catalyses the reaction Preferential cleavage: Glu-|-Xaa, Asp-|-Xaa.. Preferentially cleaves peptide bonds on the carboxyl-terminal side of aspartate and glutamate. Along with other extracellular proteases it is involved in colonization and infection of human tissues. Required for proteolytic maturation of thiol protease SspB and inactivation of SspC, an inhibitor of SspB. It is the most important protease for degradation of fibronectin-binding protein (FnBP) and surface protein A, which are involved in adherence to host cells. May also protect bacteria against host defense mechanism by cleaving the immunoglobulin classes IgG, IgA and IgM. May be involved in the stability of secreted lipases. This is Glutamyl endopeptidase (sspA) from Staphylococcus aureus (strain NCTC 8325 / PS 47).